A 151-amino-acid polypeptide reads, in one-letter code: Large ribosomal subunit protein uL22 (151 aa).

The span at 1 to 18 (MARINYSINADPENTSKA) shows a compositional bias: polar residues. The interval 1 to 23 (MARINYSINADPENTSKAMGSEL) is disordered.

Belongs to the universal ribosomal protein uL22 family. In terms of assembly, part of the 50S ribosomal subunit.

Functionally, this protein binds specifically to 23S rRNA. It makes multiple contacts with different domains of the 23S rRNA in the assembled 50S subunit and ribosome. The globular domain of the protein is located near the polypeptide exit tunnel on the outside of the subunit, while an extended beta-hairpin is found that lines the wall of the exit tunnel in the center of the 70S ribosome. The chain is Large ribosomal subunit protein uL22 from Methanosarcina mazei (strain ATCC BAA-159 / DSM 3647 / Goe1 / Go1 / JCM 11833 / OCM 88) (Methanosarcina frisia).